Here is a 220-residue protein sequence, read N- to C-terminus: Splicing factor U2AF 26 kDa subunit (220 aa).

The residue at position 2 (Ala2) is an N-acetylalanine. The C3H1-type 1 zinc finger occupies 12 to 40 (EKDKVNCSFYFKIGVCRHGDRCSRLHNKP). In terms of domain architecture, RRM spans 65 to 147 (SHCHVSDVEV…QAVHGELSPV (83 aa)). The segment at 149-176 (DFRESCCRQYEMGECTRGGFCNFMHLRP) adopts a C3H1-type 2 zinc-finger fold. The disordered stretch occupies residues 185 to 220 (LYGRGPRRRSPPRFHTGHHPRERNHRCSPDHWHGRF). The segment covering 189-208 (GPRRRSPPRFHTGHHPRERN) has biased composition (basic residues). Over residues 209 to 220 (HRCSPDHWHGRF) the composition is skewed to basic and acidic residues.

It belongs to the splicing factor SR family. In terms of assembly, interacts with GFI1, U2AF2 and C1QBP. In terms of tissue distribution, isoform 2 is widely expressed. Isoform 3 is highly expressed in heart, brain and lung, lower expressed in thymus and much lower expressed in peripheral blood leukocytes.

The protein localises to the nucleus. It is found in the nucleus speckle. It localises to the cytoplasm. Its function is as follows. RNA-binding protein that function as a pre-mRNA splicing factor. Plays a critical role in both constitutive and enhancer-dependent splicing by mediating protein-protein interactions and protein-RNA interactions required for accurate 3'-splice site selection. Acts by enhancing the binding of U2AF2 to weak pyrimidine tracts. Also participates in the regulation of alternative pre-mRNA splicing. Activates exon 5 skipping of PTPRC during T-cell activation; an event reversed by GFI1. Binds to RNA at the AG dinucleotide at the 3'-splice site. Shows a preference for AGC or AGA. In Homo sapiens (Human), this protein is Splicing factor U2AF 26 kDa subunit (U2AF1L4).